A 945-amino-acid chain; its full sequence is MLKLLLGDPNARKLKRYLPIVSDINLLEEEISPLTDDELRAKTADFRERLAKVSGLEKQRELLDEILPEVFSVVREASKRVLGMRHFDVQLIGGMVLHEGQIAEMKTGEGKTLVATLPSFLNALTGRGVHVVTVNDYLARRDAEWMGQVHRFLGLSVGLIQQDMTPLERRKNYECDITYATNSELGFDYLRDNMASDMSEIVQRKFQFCIIDEVDSILIDEARTPLIISGQIERPQEKYQKAAEVVASLIRAAEMGKDGIDPEGDYEVDEKQRTCTLTDEGFARSEELLKVNDLYDPKDPWAHYITNALKAKELFVKDVNYIVRNGEAVIVDEFTGRVMPGRRWSDGQHQAIEAKEKLNIQSETQTLASITYQNFFLLYPRLAGMTGTAKTEEVEFEKTYQLETTVIPTNRPRSRNDWVDQVYKTEAGKWRAVANETAEVHKKGRPVLVGTTSVEKSELLSSLLAEEQIPHNLLNAKPENVEREAEIVAQAGRAGAVTIATNMAGRGTDIILGGNSDYMARLKLREVLLPKLVKPEDGHKPPVPLQRRSESSGFGEDKDVTTDNSKPLSASSALGTLYPCVLTEDTEKVLIDLERKLVADWGDRALTAIELEDRISTAAEKAPTNDASIQLMRDAISLVKSEYDVVVQKEEVQVREAGGLHVIGTERHESRRVDNQLRGRAGRQGDLGSTRFFLSLGDNLLRIFGGDRVASLMNAFKVDEDMPIESGMLTRSLESAQKKVETYYYDIRKQVFEYDEVMNNQRRAVYSERRRVLDGFGLKKQVIGYGEKTMEEIVYAYVNPDLPSEEWDLAQLVSKVKEFVYLLNDLKPDQLEGLDIDELKAFLQEQLRNAYDLKEAQIEEQKPGLMKEAERFFILQQIDTLWREHLQAMDALRESVGLRGYGQKDPLIEYKNEGYDMFLEMMTNMRRNVIYSMFMFQPAPESDKE.

ATP-binding positions include Gln-90, 108 to 112 (GEGKT), and Asp-509. A disordered region spans residues 533–568 (VKPEDGHKPPVPLQRRSESSGFGEDKDVTTDNSKPL). The segment covering 547–561 (RRSESSGFGEDKDVT) has biased composition (basic and acidic residues).

It belongs to the SecA family. Monomer and homodimer. Part of the essential Sec protein translocation apparatus which comprises SecA, SecYEG and auxiliary proteins SecDF. Other proteins may also be involved.

The protein resides in the cell inner membrane. It is found in the cellular thylakoid membrane. It localises to the cytoplasm. The catalysed reaction is ATP + H2O + cellular proteinSide 1 = ADP + phosphate + cellular proteinSide 2.. Part of the Sec protein translocase complex. Interacts with the SecYEG preprotein conducting channel. Has a central role in coupling the hydrolysis of ATP to the transfer of proteins into and across the cell membrane, serving as an ATP-driven molecular motor driving the stepwise translocation of polypeptide chains across the membrane. In terms of biological role, probably participates in protein translocation into and across both the cytoplasmic and thylakoid membranes in cyanobacterial cells. The sequence is that of Protein translocase subunit SecA from Prochlorococcus marinus (strain MIT 9211).